The chain runs to 915 residues: Coiled-coil domain-containing protein 57 (915 aa).

Residues 1–502 are centrosomal targeting domain; the sequence is MLPLGSEPAL…MHGLPRPGAQ (502 aa). Coiled coils occupy residues 92-173, 214-422, 456-483, and 521-548; these read VSEL…QRQE, LEAL…LERD, KSQV…VTLE, and IQRL…LSHQ. Disordered stretches follow at residues 555–574, 606–653, and 724–915; these read TAAE…GDAA, PLKM…QAGP, and QHGG…NIMD. The segment at 606 to 915 is microtubule binding domain; it reads PLKMSSPHAE…PKIRNYNIMD (310 aa). The span at 613–627 shows a compositional bias: polar residues; the sequence is HAESQPSVRTSTETT. Over residues 628–652 the composition is skewed to low complexity; it reads GGSAQAGQAGGSVQAGQAGGSVQAG. Basic and acidic residues predominate over residues 745–758; sequence GREDAKSAEDEAPS. 3 stretches are compositionally biased toward polar residues: residues 781–794, 819–830, and 841–852; these read PKTQ…TCKS, SHSSSSFASGTL, and SSPSGVTSQGDS. The segment covering 879 to 891 has biased composition (low complexity); it reads KTAAQAKAKTTGA.

As to quaternary structure, interacts with CEP63; the interaction is required for their location to proximal end of centrioles. Interacts with microtubules.

The protein resides in the cytoplasm. It localises to the cytoskeleton. The protein localises to the microtubule organizing center. It is found in the centrosome. Its subcellular location is the centriolar satellite. The protein resides in the centriole. It localises to the spindle. Pleiotropic regulator of centriole duplication, mitosis, and ciliogenesis. Critical interface between centrosome and microtubule-mediated cellular processes. Centriole duplication protein required for recruitment of CEP63, CEP152, and PLK4 to the centrosome. Independent of its centrosomal targeting, localizes to and interacts with microtubules and regulates microtubule nucleation, stability, and mitotic progression. The sequence is that of Coiled-coil domain-containing protein 57 from Homo sapiens (Human).